The primary structure comprises 1103 residues: Kinesin-like protein KIF1C (1103 aa).

The region spanning 5–348 (SVKVAVRVRP…LRYADRTKQI (344 aa)) is the Kinesin motor domain. 97-104 (GQTGAGKS) contacts ATP. Position 295 is a phosphoserine (Ser-295). 2 coiled-coil regions span residues 359–388 (NARL…SALE) and 438–479 (EEAM…LAEM). The segment at 400 to 438 (ALPAVSSPPAPVSPSSPTTHNGELEPSFSPNTESQIGPE) is disordered. Phosphoserine is present on Ser-494. An FHA domain is found at 523 to 590 (TRVGQVDMDI…LKSGNRIVMG (68 aa)). Positions 633–674 (EQQGIDIKLEMEKRLQDLENQYRKEKEEADLLLEQQRLYADS) form a coiled coil. Phosphoserine occurs at positions 674 and 676. 3 disordered regions span residues 808–828 (GEEE…ARGA), 874–924 (LAQD…WERV), and 950–1103 (QGLQ…GAAV). Residues 813–822 (GGAGSGGGSE) show a composition bias toward gly residues. The stretch at 828-872 (AEVEDLRAHIDKLTGILQEVKLQNSSKDRELQALRDRMLRMERVI) forms a coiled coil. Residues 893–910 (PEGSEAAEEAAPSDRMPS) are compositionally biased toward low complexity. Residue Ser-915 is modified to Phosphoserine. The span at 953-962 (QGSGGRGGGL) shows a compositional bias: gly residues. A compositionally biased stretch (basic residues) spans 1021-1031 (PSPRRSHHPRR). Ser-1033 carries the phosphoserine modification. At Arg-1041 the chain carries Omega-N-methylarginine. Positions 1062 to 1083 (PQPPQPYPAQRPPGPRYPPYTT) are enriched in pro residues. Thr-1083 carries the post-translational modification Phosphothreonine. Residue Ser-1092 is modified to Phosphoserine. The span at 1092-1103 (SAPDLKESGAAV) shows a compositional bias: basic and acidic residues.

The protein belongs to the TRAFAC class myosin-kinesin ATPase superfamily. Kinesin family. Unc-104 subfamily. Monomer. Interacts with BICD2. In terms of processing, phosphorylated on tyrosine residues. In terms of tissue distribution, expressed in all tissues examined, with most abundant expression in heart and skeletal muscle.

It is found in the cytoplasm. The protein resides in the cytoskeleton. Its function is as follows. Motor required for the retrograde transport of Golgi vesicles to the endoplasmic reticulum. Has a microtubule plus end-directed motility. This chain is Kinesin-like protein KIF1C (KIF1C), found in Homo sapiens (Human).